A 231-amino-acid polypeptide reads, in one-letter code: NADH-ubiquinone oxidoreductase chain 4 (231 aa).

Transmembrane regions (helical) follow at residues 1–21, 34–54, 63–85, 89–111, 118–138, and 169–189; these read PIAG…YGII, MFLP…LTCL, IAYS…TPWG, AMAL…NTTY, ILIL…WWLL, and TIIL…HMFL.

It belongs to the complex I subunit 4 family.

It is found in the mitochondrion membrane. It catalyses the reaction a ubiquinone + NADH + 5 H(+)(in) = a ubiquinol + NAD(+) + 4 H(+)(out). Its function is as follows. Core subunit of the mitochondrial membrane respiratory chain NADH dehydrogenase (Complex I) that is believed to belong to the minimal assembly required for catalysis. Complex I functions in the transfer of electrons from NADH to the respiratory chain. The immediate electron acceptor for the enzyme is believed to be ubiquinone. The chain is NADH-ubiquinone oxidoreductase chain 4 (MT-ND4) from Trimeresurus cantori (Cantor's pit viper).